The chain runs to 70 residues: DNA-directed RNA polymerase subunit epsilon (70 aa).

It belongs to the RNA polymerase subunit epsilon family. RNAP is composed of a core of 2 alpha, a beta and a beta' subunit. The core is associated with a delta subunit, and at least one of epsilon or omega. When a sigma factor is associated with the core the holoenzyme is formed, which can initiate transcription.

It carries out the reaction RNA(n) + a ribonucleoside 5'-triphosphate = RNA(n+1) + diphosphate. Functionally, a non-essential component of RNA polymerase (RNAP). This chain is DNA-directed RNA polymerase subunit epsilon, found in Enterococcus faecalis (strain ATCC 700802 / V583).